A 271-amino-acid polypeptide reads, in one-letter code: NH(3)-dependent NAD(+) synthetase (271 aa).

Residue 43–50 participates in ATP binding; the sequence is GISGGQDS. Residue D49 participates in Mg(2+) binding. Deamido-NAD(+) is bound at residue R136. Position 156 (T156) interacts with ATP. Residue E161 coordinates Mg(2+). Deamido-NAD(+) contacts are provided by K169 and D176. Residues K185 and T207 each contribute to the ATP site. 256-257 lines the deamido-NAD(+) pocket; it reads HK.

This sequence belongs to the NAD synthetase family. In terms of assembly, homodimer.

The enzyme catalyses deamido-NAD(+) + NH4(+) + ATP = AMP + diphosphate + NAD(+) + H(+). It functions in the pathway cofactor biosynthesis; NAD(+) biosynthesis; NAD(+) from deamido-NAD(+) (ammonia route): step 1/1. Functionally, catalyzes the ATP-dependent amidation of deamido-NAD to form NAD. Uses ammonia as a nitrogen source. The chain is NH(3)-dependent NAD(+) synthetase from Tropheryma whipplei (strain TW08/27) (Whipple's bacillus).